Reading from the N-terminus, the 421-residue chain is Serine hydroxymethyltransferase (421 aa).

(6S)-5,6,7,8-tetrahydrofolate contacts are provided by residues leucine 118 and 122 to 124 (GHL). Lysine 226 carries the N6-(pyridoxal phosphate)lysine modification. Glutamate 242 serves as a coordination point for (6S)-5,6,7,8-tetrahydrofolate.

This sequence belongs to the SHMT family. In terms of assembly, homodimer. Pyridoxal 5'-phosphate serves as cofactor.

It localises to the cytoplasm. It carries out the reaction (6R)-5,10-methylene-5,6,7,8-tetrahydrofolate + glycine + H2O = (6S)-5,6,7,8-tetrahydrofolate + L-serine. It participates in one-carbon metabolism; tetrahydrofolate interconversion. The protein operates within amino-acid biosynthesis; glycine biosynthesis; glycine from L-serine: step 1/1. Functionally, catalyzes the reversible interconversion of serine and glycine with tetrahydrofolate (THF) serving as the one-carbon carrier. This reaction serves as the major source of one-carbon groups required for the biosynthesis of purines, thymidylate, methionine, and other important biomolecules. Also exhibits THF-independent aldolase activity toward beta-hydroxyamino acids, producing glycine and aldehydes, via a retro-aldol mechanism. The chain is Serine hydroxymethyltransferase from Mycoplasmopsis synoviae (strain 53) (Mycoplasma synoviae).